Here is a 208-residue protein sequence, read N- to C-terminus: V-type ATP synthase subunit D (208 aa).

The protein belongs to the V-ATPase D subunit family.

Produces ATP from ADP in the presence of a proton gradient across the membrane. The sequence is that of V-type ATP synthase subunit D from Streptococcus pyogenes serotype M3 (strain ATCC BAA-595 / MGAS315).